Reading from the N-terminus, the 753-residue chain is 5-methyltetrahydropteroyltriglutamate--homocysteine methyltransferase (753 aa).

5-methyltetrahydropteroyltri-L-glutamate contacts are provided by residues 17 to 20 (RELK) and Lys-117. L-homocysteine contacts are provided by residues 431–433 (IGS) and Glu-484. Residues 431 to 433 (IGS) and Glu-484 contribute to the L-methionine site. Residues 515–516 (RC) and Trp-561 each bind 5-methyltetrahydropteroyltri-L-glutamate. Position 599 (Asp-599) interacts with L-homocysteine. Asp-599 provides a ligand contact to L-methionine. Glu-605 serves as a coordination point for 5-methyltetrahydropteroyltri-L-glutamate. Residues His-641, Cys-643, and Glu-665 each coordinate Zn(2+). Residue His-694 is the Proton donor of the active site. Position 726 (Cys-726) interacts with Zn(2+).

This sequence belongs to the vitamin-B12 independent methionine synthase family. It depends on Zn(2+) as a cofactor.

It catalyses the reaction 5-methyltetrahydropteroyltri-L-glutamate + L-homocysteine = tetrahydropteroyltri-L-glutamate + L-methionine. It participates in amino-acid biosynthesis; L-methionine biosynthesis via de novo pathway; L-methionine from L-homocysteine (MetE route): step 1/1. Catalyzes the transfer of a methyl group from 5-methyltetrahydrofolate to homocysteine resulting in methionine formation. The polypeptide is 5-methyltetrahydropteroyltriglutamate--homocysteine methyltransferase (Escherichia coli O157:H7 (strain EC4115 / EHEC)).